The sequence spans 153 residues: ORM1-like protein 3 (153 aa).

Residues 1 to 17 (MNVGTAHSEVNPNTRVM) form an important for ceramide level-sensing region. Topologically, residues 1 to 21 (MNVGTAHSEVNPNTRVMNSRG) are cytoplasmic. 2 helical membrane passes run 22–42 (IWLS…SIPF) and 43–63 (VSVP…MYIF). The Cytoplasmic segment spans residues 64 to 94 (LHTVKGTPFETPDQGKARLLTHWEQMDYGVQ). Residues 95 to 117 (FTASRKFLTITPIVLYFLTSFYT) form a helical membrane-spanning segment. Topologically, residues 118–121 (KYDQ) are extracellular. Residues 122-142 (VHFILNTVSLMTVLIPKLPQL) traverse the membrane as a helical segment. Pro137 carries the hydroxyproline modification. Residues 143-153 (HGVRIFGINKY) lie on the Cytoplasmic side of the membrane.

The protein belongs to the ORM family. As to quaternary structure, ceramide-sensitive subunit of the serine palmitoyltransferase (SPT) complex, which is also composed of SPTLC1, SPTLC2/3 and SPTSSA/B. When hydroxylated at Pro-137, ubiquitinated via 'Lys-48'-linkage, leading to proteasomal degradation. In endothelial cells, ORMDL3 proteasomal degradation is controlled by the sphingosine 1-phosphate receptor signaling pathway.

It is found in the endoplasmic reticulum membrane. Plays an essential role in the homeostatic regulation of sphingolipid de novo biosynthesis by modulating the activity of the serine palmitoyltransferase (SPT) in response to ceramide levels. When complexed to SPT, the binding of ceramides to its N-terminus stabilizes a conformation that block SPT substrate entry, hence preventing SPT catalytic activity. Through this mechanism, maintains ceramide levels at sufficient concentrations for the production of complex sphingolipids, but which prevents the accumulation of ceramides to levels that trigger apoptosis. The sequence is that of ORM1-like protein 3 (Ormdl3) from Mus musculus (Mouse).